Reading from the N-terminus, the 90-residue chain is Small ribosomal subunit protein uS15 (90 aa).

This sequence belongs to the universal ribosomal protein uS15 family. As to quaternary structure, part of the 30S ribosomal subunit. Forms a bridge to the 50S subunit in the 70S ribosome, contacting the 23S rRNA.

In terms of biological role, one of the primary rRNA binding proteins, it binds directly to 16S rRNA where it helps nucleate assembly of the platform of the 30S subunit by binding and bridging several RNA helices of the 16S rRNA. Forms an intersubunit bridge (bridge B4) with the 23S rRNA of the 50S subunit in the ribosome. The protein is Small ribosomal subunit protein uS15 of Helicobacter pylori (strain HPAG1).